A 77-amino-acid polypeptide reads, in one-letter code: Acyl carrier protein (77 aa).

The 76-residue stretch at 2 to 77 (ADVMERVTKI…DVVDYINNNQ (76 aa)) folds into the Carrier domain. Position 37 is an O-(pantetheine 4'-phosphoryl)serine (S37).

Belongs to the acyl carrier protein (ACP) family. In terms of processing, 4'-phosphopantetheine is transferred from CoA to a specific serine of apo-ACP by AcpS. This modification is essential for activity because fatty acids are bound in thioester linkage to the sulfhydryl of the prosthetic group.

It localises to the cytoplasm. It functions in the pathway lipid metabolism; fatty acid biosynthesis. Its function is as follows. Carrier of the growing fatty acid chain in fatty acid biosynthesis. This is Acyl carrier protein from Shouchella clausii (strain KSM-K16) (Alkalihalobacillus clausii).